The chain runs to 151 residues: Large ribosomal subunit protein bL9 (151 aa).

The protein belongs to the bacterial ribosomal protein bL9 family.

Its function is as follows. Binds to the 23S rRNA. This chain is Large ribosomal subunit protein bL9, found in Mycobacteroides abscessus (strain ATCC 19977 / DSM 44196 / CCUG 20993 / CIP 104536 / JCM 13569 / NCTC 13031 / TMC 1543 / L948) (Mycobacterium abscessus).